The chain runs to 81 residues: Photosystem I iron-sulfur center (81 aa).

4Fe-4S ferredoxin-type domains are found at residues 1–31 (MSHS…MVPW) and 39–68 (IASS…IRVY). Residues Cys-11, Cys-14, Cys-17, Cys-21, Cys-48, Cys-51, Cys-54, and Cys-58 each contribute to the [4Fe-4S] cluster site.

As to quaternary structure, the cyanobacterial PSI reaction center is composed of one copy each of PsaA,B,C,D,E,F,I,J,K,L,M and X, and forms trimeric complexes. It depends on [4Fe-4S] cluster as a cofactor.

It is found in the cellular thylakoid membrane. It carries out the reaction reduced [plastocyanin] + hnu + oxidized [2Fe-2S]-[ferredoxin] = oxidized [plastocyanin] + reduced [2Fe-2S]-[ferredoxin]. Functionally, apoprotein for the two 4Fe-4S centers FA and FB of photosystem I (PSI); essential for photochemical activity. FB is the terminal electron acceptor of PSI, donating electrons to ferredoxin. The C-terminus interacts with PsaA/B/D and helps assemble the protein into the PSI complex. Required for binding of PsaD and PsaE to PSI. PSI is a plastocyanin/cytochrome c6-ferredoxin oxidoreductase, converting photonic excitation into a charge separation, which transfers an electron from the donor P700 chlorophyll pair to the spectroscopically characterized acceptors A0, A1, FX, FA and FB in turn. The protein is Photosystem I iron-sulfur center of Microcystis aeruginosa (strain NIES-843 / IAM M-2473).